A 339-amino-acid polypeptide reads, in one-letter code: Phenylalanine--tRNA ligase alpha subunit (339 aa).

Residue Glu-250 participates in Mg(2+) binding.

The protein belongs to the class-II aminoacyl-tRNA synthetase family. Phe-tRNA synthetase alpha subunit type 1 subfamily. Tetramer of two alpha and two beta subunits. It depends on Mg(2+) as a cofactor.

Its subcellular location is the cytoplasm. The enzyme catalyses tRNA(Phe) + L-phenylalanine + ATP = L-phenylalanyl-tRNA(Phe) + AMP + diphosphate + H(+). The chain is Phenylalanine--tRNA ligase alpha subunit from Bacteroides thetaiotaomicron (strain ATCC 29148 / DSM 2079 / JCM 5827 / CCUG 10774 / NCTC 10582 / VPI-5482 / E50).